Consider the following 490-residue polypeptide: AP-5 complex subunit mu-1 (490 aa).

An MHD domain is found at 206-476; sequence KPQVSISITE…LISSDYYIWN (271 aa).

It belongs to the adaptor complexes medium subunit family. In terms of assembly, probably part of the adaptor protein complex 5 (AP-5) a tetramer composed of AP5B1, AP5M1, AP5S1 and AP5Z1.

It is found in the cytoplasm. Its subcellular location is the cytosol. The protein localises to the late endosome membrane. The protein resides in the lysosome membrane. Its function is as follows. As part of AP-5, a probable fifth adaptor protein complex it may be involved in endosomal transport. This chain is AP-5 complex subunit mu-1 (AP5M1), found in Macaca fascicularis (Crab-eating macaque).